The chain runs to 358 residues: UDP-N-acetylglucosamine--N-acetylmuramyl-(pentapeptide) pyrophosphoryl-undecaprenol N-acetylglucosamine transferase (358 aa).

Residues threonine 11–glycine 13, asparagine 120, arginine 161, serine 188, and glutamine 282 each bind UDP-N-acetyl-alpha-D-glucosamine.

This sequence belongs to the glycosyltransferase 28 family. MurG subfamily.

The protein localises to the cell inner membrane. It carries out the reaction di-trans,octa-cis-undecaprenyl diphospho-N-acetyl-alpha-D-muramoyl-L-alanyl-D-glutamyl-meso-2,6-diaminopimeloyl-D-alanyl-D-alanine + UDP-N-acetyl-alpha-D-glucosamine = di-trans,octa-cis-undecaprenyl diphospho-[N-acetyl-alpha-D-glucosaminyl-(1-&gt;4)]-N-acetyl-alpha-D-muramoyl-L-alanyl-D-glutamyl-meso-2,6-diaminopimeloyl-D-alanyl-D-alanine + UDP + H(+). Its pathway is cell wall biogenesis; peptidoglycan biosynthesis. In terms of biological role, cell wall formation. Catalyzes the transfer of a GlcNAc subunit on undecaprenyl-pyrophosphoryl-MurNAc-pentapeptide (lipid intermediate I) to form undecaprenyl-pyrophosphoryl-MurNAc-(pentapeptide)GlcNAc (lipid intermediate II). The sequence is that of UDP-N-acetylglucosamine--N-acetylmuramyl-(pentapeptide) pyrophosphoryl-undecaprenol N-acetylglucosamine transferase from Synechococcus sp. (strain CC9311).